The chain runs to 186 residues: Interferon beta (186 aa).

An N-terminal signal peptide occupies residues Met-1–Ser-21. Tyr-24 is modified (phosphotyrosine). 4 N-linked (GlcNAc...) asparagine glycosylation sites follow: Asn-46, Asn-101, Asn-131, and Asn-136. Cys-52 and Cys-161 form a disulfide bridge.

It belongs to the alpha/beta interferon family. As to quaternary structure, monomer.

It localises to the secreted. Functionally, type I interferon cytokine that plays a key role in the innate immune response to infection, developing tumors and other inflammatory stimuli. Signals via binding to high-affinity (IFNAR2) and low-affinity (IFNAR1) heterodimeric receptor, activating the canonical Jak-STAT signaling pathway resulting in transcriptional activation or repression of interferon-regulated genes that encode the effectors of the interferon response, such as antiviral proteins, regulators of cell proliferation and differentiation, and immunoregulatory proteins. Signals mostly via binding to a IFNAR1-IFNAR2 heterodimeric receptor, but can also function with IFNAR1 alone and independently of Jak-STAT pathways. Elicits a wide variety of responses, including antiviral and antibacterial activities, and can regulate the development of B-cells, myelopoiesis and lipopolysaccharide (LPS)-inducible production of tumor necrosis factor. Plays a role in neuronal homeostasis by regulating dopamine turnover and protecting dopaminergic neurons: acts by promoting neuronal autophagy and alpha-synuclein clearance, thereby preventing dopaminergic neuron loss. IFNB1 is more potent than interferon-alpha (IFN-alpha) in inducing the apoptotic and antiproliferative pathways required for control of tumor cell growth. The polypeptide is Interferon beta (IFNB1) (Felis catus (Cat)).